The chain runs to 102 residues: Large ribosomal subunit protein bL21 (102 aa).

Residues 79–91 (RKDSKRKKGHRQP) are compositionally biased toward basic residues. The segment at 79–102 (RKDSKRKKGHRQPYTKLTIDKINA) is disordered.

This sequence belongs to the bacterial ribosomal protein bL21 family. In terms of assembly, part of the 50S ribosomal subunit. Contacts protein L20.

Functionally, this protein binds to 23S rRNA in the presence of protein L20. This chain is Large ribosomal subunit protein bL21, found in Staphylococcus saprophyticus subsp. saprophyticus (strain ATCC 15305 / DSM 20229 / NCIMB 8711 / NCTC 7292 / S-41).